The chain runs to 1364 residues: Formin-like protein 6 (1364 aa).

A Phosphatase tensin-type domain is found at 9-193; that stretch reads YRKPPDGLLE…HYISRRNVSA (185 aa). The active-site Phosphocysteine intermediate is Cys-126. The region spanning 199-338 is the C2 tensin-type domain; it reads DRALTLDCVI…FRAEVLFSEM (140 aa). 3 disordered regions span residues 614–934, 976–999, and 1317–1364; these read KCTP…NLKP, VLPS…KPEK, and EAEA…ASAK. A compositionally biased stretch (pro residues) spans 617–631; the sequence is PSPPPLLPPLAPVVP. Positions 657–690 are enriched in polar residues; it reads SFPSLSPTQQKQSTSKLCQTILPTNHQLSSSNIT. Pro residues predominate over residues 734-743; sequence PPAPPPPPLQ. Residues 744–757 show a composition bias toward low complexity; sequence SPSTPRCSPVRTLA. Pro residues-rich tracts occupy residues 774–813 and 856–865; these read GPPP…PAAP and PSPPPPPPPC. Residues 916–929 show a composition bias toward polar residues; it reads MSRSLQSGQAASRR. One can recognise an FH2 domain in the interval 922–1322; sequence SGQAASRRSN…KALKEAEAEK (401 aa). Residues 1317–1351 show a composition bias toward basic and acidic residues; sequence EAEAEKTKKEPENAQKTKEPGNDKAKHNNSIKELD. Residues 1353 to 1364 show a composition bias toward polar residues; it reads SLQSPAQTASAK.

Belongs to the formin-like family. Class-II subfamily.

This is Formin-like protein 6 (FH6) from Oryza sativa subsp. japonica (Rice).